A 472-amino-acid polypeptide reads, in one-letter code: MPDVKKRKIAHEAPEHGSDAESTSSHESVAQQDDTAETQDEAAATETRPAPKSFKDLGIIDQLCEACETMGYKAPTPIQAESIPLALQGRDLIGLAETGSGKTAAFALPILQALMEKPQSFFGLILAPTRELAFQISKSFESLGSTINVRCAVIVGGMDMVSQSIALGKKPHIIVATPGRLLDHLENTKGFSLRTLKYLVMDEADRLLDMDFGPLLDKILKVLPRERRTFLFSATMSSKVESLQRASLSNPLRVSVSSNKYQTVSTLLQSYLFLPHKHKDIYLVYLLNEFVGQSAIIFTRTVHETQRISFLLRSLGFGAIPLHGQLSQSARLGALGKFRSRSRDILVATDVAARGLDIPSVDVVLNFDLPTDSKTYVHRVGRTARAGKSGVAISFVTQYDVEIWLRIEGALGKKLKEYELEKDEVMVLAERVGEAQRQAIVEMKNFDEKRGTKAKKFGKGKRSRDEMDQEEG.

The segment at 1 to 51 (MPDVKKRKIAHEAPEHGSDAESTSSHESVAQQDDTAETQDEAAATETRPAP) is disordered. Residues 10 to 19 (AHEAPEHGSD) are compositionally biased toward basic and acidic residues. A compositionally biased stretch (polar residues) spans 20–29 (AESTSSHESV). The Q motif motif lies at 52 to 80 (KSFKDLGIIDQLCEACETMGYKAPTPIQA). The Helicase ATP-binding domain maps to 83-254 (IPLALQGRDL…RASLSNPLRV (172 aa)). Residue 96 to 103 (AETGSGKT) participates in ATP binding. The short motif at 202 to 205 (DEAD) is the DEAD box element. Residues 282–426 (YLVYLLNEFV…EYELEKDEVM (145 aa)) enclose the Helicase C-terminal domain. Residues 451-472 (GTKAKKFGKGKRSRDEMDQEEG) form a disordered region. Residues 452–462 (TKAKKFGKGKR) show a composition bias toward basic residues.

Belongs to the DEAD box helicase family. DDX47/RRP3 subfamily. Interacts with the SSU processome.

The protein resides in the nucleus. It carries out the reaction ATP + H2O = ADP + phosphate + H(+). ATP-dependent rRNA helicase required for pre-ribosomal RNA processing. Involved in the maturation of the 35S-pre-rRNA and to its cleavage to mature 18S rRNA. The protein is ATP-dependent rRNA helicase rrp3 of Neosartorya fischeri (strain ATCC 1020 / DSM 3700 / CBS 544.65 / FGSC A1164 / JCM 1740 / NRRL 181 / WB 181) (Aspergillus fischerianus).